Reading from the N-terminus, the 331-residue chain is Nucleotide sugar transporter SLC35B4 (331 aa).

Transmembrane regions (helical) follow at residues 4 to 24 (ALAV…LELL), 30 to 50 (GCGN…GFLF), 59 to 79 (PAIP…VSVV), 92 to 112 (LHMI…IIIL), 117 to 137 (SIFK…CTFM), 153 to 173 (GFQA…ALLM), 201 to 221 (ALPL…AVLF), 229 to 249 (IPGI…NIIT), 251 to 267 (YVCI…CASL), 268 to 288 (TVTL…ILYF), and 291 to 311 (PFTL…LMYT). Positions 326–331 (KDNKKN) match the Mediates endoplasmic reticulum retention motif.

This sequence belongs to the nucleotide-sugar transporter family. SLC35B subfamily.

The protein resides in the endoplasmic reticulum membrane. The enzyme catalyses UDP-N-acetyl-alpha-D-glucosamine(in) + UDP-alpha-D-glucuronate(out) = UDP-N-acetyl-alpha-D-glucosamine(out) + UDP-alpha-D-glucuronate(in). The catalysed reaction is UDP-alpha-D-xylose(in) + UDP-alpha-D-glucuronate(out) = UDP-alpha-D-xylose(out) + UDP-alpha-D-glucuronate(in). Antiporter that transports nucleotide sugars across the endoplasmic reticulum (ER) membrane in exchange for another nucleotide sugar. May couple UDP-alpha-D-glucuronate (UDP-GlcA) or UDP-alpha-D-xylose (UDP-Xyl) efflux to UDP-alpha-D-glucuronate (UDP-GlcA) influx into the ER lumen, which in turn stimulates glucuronidation and excretion of endobiotics and xenobiotics. The sequence is that of Nucleotide sugar transporter SLC35B4 (SLC35B4) from Macaca fascicularis (Crab-eating macaque).